The chain runs to 1414 residues: Phenyloxazoline synthase MbtB (1414 aa).

One can recognise a Carrier 1 domain in the interval 5-78 (TACSEIIRAE…AWSQLVSAGT (74 aa)). Ser-39 carries the post-translational modification O-(pantetheine 4'-phosphoryl)serine. The condensation/cyclization stretch occupies residues 96–394 (EGEPFPVAPM…SSLLLDVDLT (299 aa)). Residues 579 to 975 (SYAQLRDQAS…RLPGVHAAAA (397 aa)) form an adenylation region. Residues 1057 to 1135 (APRTVLQRAL…ALAQLLTGRE (79 aa)) form the Carrier 2 domain. Ser-1094 is modified (O-(pantetheine 4'-phosphoryl)serine). The segment at 1188 to 1413 (GAVLVFPHAG…AVARMVSADV (226 aa)) is thioesterase.

It belongs to the ATP-dependent AMP-binding enzyme family. MbtB subfamily. Pantetheine 4'-phosphate is required as a cofactor. In terms of processing, 4'-phosphopantetheine is transferred from CoA to a specific serine in each of the two carrier protein domains, leading to their activation from apo to holo forms.

Its pathway is siderophore biosynthesis; mycobactin biosynthesis. Functionally, involved in the initial steps of the mycobactin biosynthetic pathway. Putatively couples activated salicylic acid with serine or threonine and cyclizes this precursor to the hydroxyphenyloxazoline ring system present in this class of siderophores. Essential for growth in macrophages. The sequence is that of Phenyloxazoline synthase MbtB (mbtB) from Mycobacterium tuberculosis (strain CDC 1551 / Oshkosh).